A 176-amino-acid polypeptide reads, in one-letter code: ATP-dependent protease subunit HslV (176 aa).

Threonine 5 is an active-site residue. Na(+)-binding residues include serine 161, cysteine 164, and threonine 167.

It belongs to the peptidase T1B family. HslV subfamily. A double ring-shaped homohexamer of HslV is capped on each side by a ring-shaped HslU homohexamer. The assembly of the HslU/HslV complex is dependent on binding of ATP.

The protein resides in the cytoplasm. It catalyses the reaction ATP-dependent cleavage of peptide bonds with broad specificity.. Its activity is regulated as follows. Allosterically activated by HslU binding. Functionally, protease subunit of a proteasome-like degradation complex believed to be a general protein degrading machinery. This is ATP-dependent protease subunit HslV from Thermoanaerobacter pseudethanolicus (strain ATCC 33223 / 39E) (Clostridium thermohydrosulfuricum).